The primary structure comprises 365 residues: Aminomethyltransferase (365 aa).

It belongs to the GcvT family. In terms of assembly, the glycine cleavage system is composed of four proteins: P, T, L and H.

The catalysed reaction is N(6)-[(R)-S(8)-aminomethyldihydrolipoyl]-L-lysyl-[protein] + (6S)-5,6,7,8-tetrahydrofolate = N(6)-[(R)-dihydrolipoyl]-L-lysyl-[protein] + (6R)-5,10-methylene-5,6,7,8-tetrahydrofolate + NH4(+). Functionally, the glycine cleavage system catalyzes the degradation of glycine. The protein is Aminomethyltransferase of Bacillus pumilus (strain SAFR-032).